We begin with the raw amino-acid sequence, 277 residues long: 3-methyl-2-oxobutanoate hydroxymethyltransferase (277 aa).

Mg(2+) contacts are provided by Asp42 and Asp81. Residues 42 to 43, Asp81, and Lys110 each bind 3-methyl-2-oxobutanoate; that span reads DS. Glu112 is a Mg(2+) binding site. Glu179 (proton acceptor) is an active-site residue.

This sequence belongs to the PanB family. In terms of assembly, homodecamer; pentamer of dimers. Requires Mg(2+) as cofactor.

The protein localises to the cytoplasm. It carries out the reaction 3-methyl-2-oxobutanoate + (6R)-5,10-methylene-5,6,7,8-tetrahydrofolate + H2O = 2-dehydropantoate + (6S)-5,6,7,8-tetrahydrofolate. The protein operates within cofactor biosynthesis; (R)-pantothenate biosynthesis; (R)-pantoate from 3-methyl-2-oxobutanoate: step 1/2. Catalyzes the reversible reaction in which hydroxymethyl group from 5,10-methylenetetrahydrofolate is transferred onto alpha-ketoisovalerate to form ketopantoate. The polypeptide is 3-methyl-2-oxobutanoate hydroxymethyltransferase (Anaplasma marginale (strain Florida)).